A 129-amino-acid polypeptide reads, in one-letter code: Protein Turandot A1/2 (129 aa).

The N-terminal stretch at 1–21 (MNSSTALMCFALLLISPLCLG) is a signal peptide. Asn-49 carries N-linked (GlcNAc...) asparagine glycosylation.

The protein belongs to the Turandot family.

It localises to the secreted. Its function is as follows. A humoral factor that plays a role in stress tolerance; gives increased resistance to the lethal effects of bacterial challenge and stress. Regulated by the JAK/STAT pathway and NF-KB-like Relish pathway in the fat body, upd3 in the hemocytes and Mekk1 in response to septic injury and consequent immune response. The chain is Protein Turandot A1/2 (TotA1) from Drosophila sechellia (Fruit fly).